The sequence spans 387 residues: Alkanesulfonate monooxygenase (387 aa).

This sequence belongs to the SsuD family.

It catalyses the reaction an alkanesulfonate + FMNH2 + O2 = an aldehyde + FMN + sulfite + H2O + 2 H(+). Functionally, catalyzes the desulfonation of aliphatic sulfonates. This is Alkanesulfonate monooxygenase from Cupriavidus pinatubonensis (strain JMP 134 / LMG 1197) (Cupriavidus necator (strain JMP 134)).